The primary structure comprises 332 residues: DNA-directed RNA polymerase subunit alpha (332 aa).

The tract at residues 1–234 (MTVTANQVLR…DQLSVFGDFT (234 aa)) is alpha N-terminal domain (alpha-NTD). The segment at 248-332 (VDPVLLRPID…AGVASHGMLG (85 aa)) is alpha C-terminal domain (alpha-CTD).

The protein belongs to the RNA polymerase alpha chain family. In terms of assembly, homodimer. The RNAP catalytic core consists of 2 alpha, 1 beta, 1 beta' and 1 omega subunit. When a sigma factor is associated with the core the holoenzyme is formed, which can initiate transcription.

The enzyme catalyses RNA(n) + a ribonucleoside 5'-triphosphate = RNA(n+1) + diphosphate. Functionally, DNA-dependent RNA polymerase catalyzes the transcription of DNA into RNA using the four ribonucleoside triphosphates as substrates. This chain is DNA-directed RNA polymerase subunit alpha, found in Stenotrophomonas maltophilia (strain R551-3).